We begin with the raw amino-acid sequence, 265 residues long: Tryptophan synthase alpha chain (265 aa).

Catalysis depends on proton acceptor residues Glu49 and Asp60.

It belongs to the TrpA family. As to quaternary structure, tetramer of two alpha and two beta chains.

It carries out the reaction (1S,2R)-1-C-(indol-3-yl)glycerol 3-phosphate + L-serine = D-glyceraldehyde 3-phosphate + L-tryptophan + H2O. It functions in the pathway amino-acid biosynthesis; L-tryptophan biosynthesis; L-tryptophan from chorismate: step 5/5. In terms of biological role, the alpha subunit is responsible for the aldol cleavage of indoleglycerol phosphate to indole and glyceraldehyde 3-phosphate. The polypeptide is Tryptophan synthase alpha chain (Polynucleobacter necessarius subsp. necessarius (strain STIR1)).